A 262-amino-acid chain; its full sequence is Adenosylcobinamide-GDP ribazoletransferase (262 aa).

The next 7 membrane-spanning stretches (helical) occupy residues 37-57, 58-78, 112-132, 139-159, 183-203, 205-225, and 237-257; these read SMPL…ALCS, MFSF…GIWL, VGAF…LFLY, IPPA…AWLL, AVWA…FGGV, VWTS…AKPW, and VLGA…WLLH.

It belongs to the CobS family. Mg(2+) is required as a cofactor.

It is found in the cell membrane. The catalysed reaction is alpha-ribazole + adenosylcob(III)inamide-GDP = adenosylcob(III)alamin + GMP + H(+). The enzyme catalyses alpha-ribazole 5'-phosphate + adenosylcob(III)inamide-GDP = adenosylcob(III)alamin 5'-phosphate + GMP + H(+). The protein operates within cofactor biosynthesis; adenosylcobalamin biosynthesis; adenosylcobalamin from cob(II)yrinate a,c-diamide: step 7/7. In terms of biological role, joins adenosylcobinamide-GDP and alpha-ribazole to generate adenosylcobalamin (Ado-cobalamin). Also synthesizes adenosylcobalamin 5'-phosphate from adenosylcobinamide-GDP and alpha-ribazole 5'-phosphate. This chain is Adenosylcobinamide-GDP ribazoletransferase, found in Geobacillus thermodenitrificans (strain NG80-2).